The sequence spans 374 residues: Alanine racemase (374 aa).

The active-site Proton acceptor; specific for D-alanine is the K35. N6-(pyridoxal phosphate)lysine is present on K35. R133 is a binding site for substrate. Y264 (proton acceptor; specific for L-alanine) is an active-site residue. M312 contacts substrate.

This sequence belongs to the alanine racemase family. Pyridoxal 5'-phosphate serves as cofactor.

The enzyme catalyses L-alanine = D-alanine. Its pathway is amino-acid biosynthesis; D-alanine biosynthesis; D-alanine from L-alanine: step 1/1. Catalyzes the interconversion of L-alanine and D-alanine. May also act on other amino acids. The polypeptide is Alanine racemase (alr) (Thermobifida fusca (strain YX)).